Reading from the N-terminus, the 821-residue chain is Zinc finger protein 41 (821 aa).

Residues 1–55 (MAANGDSPPWSPALAAEGRGSSCEVRRERTPEARIHSVKRYPDLSPGPKGRSSAD) form a disordered region. Basic and acidic residues predominate over residues 24–35 (EVRRERTPEARI). Residues 69–140 (VSFEDVTVDF…EGEAPHQSCS (72 aa)) form the KRAB domain. A Glycyl lysine isopeptide (Lys-Gly) (interchain with G-Cter in SUMO2) cross-link involves residue K120. The C2H2-type 1 zinc finger occupies 313 to 335 (YVCTECVMGFTQKSHLFEHQRIH). The C2H2-type 2; degenerate zinc finger occupies 341-364 (RECDKSNKVFPQKPQVDVHPSVYT). 10 C2H2-type zinc fingers span residues 369–391 (YLCT…QKIH), 397–419 (YKCS…LRIH), 425–447 (YECS…QKTH), 453–475 (YECN…QRIH), 481–503 (YVCA…QRIH), 509–531 (YECS…QRIH), 537–559 (YICT…QKTH), 565–587 (YMCA…QKTH), 593–615 (YKCN…QKSH), and 621–643 (YECK…QRIH). Residue K647 forms a Glycyl lysine isopeptide (Lys-Gly) (interchain with G-Cter in SUMO2) linkage. 6 consecutive C2H2-type zinc fingers follow at residues 649-671 (YVCP…HRIH), 677-699 (YECS…QKIH), 705-727 (NICA…QKIH), 733-755 (YECG…QKSH), 761-783 (YECS…QIIH), and 789-811 (YACT…QKMH).

It belongs to the krueppel C2H2-type zinc-finger protein family. As to expression, expressed in the heart, brain, placenta, lung, liver, skeletal muscle, kidney and pancreas.

The protein localises to the nucleus. Functionally, may be involved in transcriptional regulation. This chain is Zinc finger protein 41 (ZNF41), found in Homo sapiens (Human).